The chain runs to 152 residues: Xanthine-guanine phosphoribosyltransferase (152 aa).

5-phospho-alpha-D-ribose 1-diphosphate contacts are provided by residues 37–38 (RG), Arg-69, and 88–96 (DDLVDTGGT). Arg-69 is a binding site for GMP. Residue Asp-89 coordinates Mg(2+). Guanine contacts are provided by Asp-92 and Ile-135. Residues Asp-92 and Ile-135 each coordinate xanthine. Residues 92–96 (DTGGT) and 134–135 (WI) contribute to the GMP site.

It belongs to the purine/pyrimidine phosphoribosyltransferase family. XGPT subfamily. As to quaternary structure, homotetramer. The cofactor is Mg(2+).

It localises to the cell inner membrane. It carries out the reaction GMP + diphosphate = guanine + 5-phospho-alpha-D-ribose 1-diphosphate. The catalysed reaction is XMP + diphosphate = xanthine + 5-phospho-alpha-D-ribose 1-diphosphate. The enzyme catalyses IMP + diphosphate = hypoxanthine + 5-phospho-alpha-D-ribose 1-diphosphate. Its pathway is purine metabolism; GMP biosynthesis via salvage pathway; GMP from guanine: step 1/1. It functions in the pathway purine metabolism; XMP biosynthesis via salvage pathway; XMP from xanthine: step 1/1. In terms of biological role, purine salvage pathway enzyme that catalyzes the transfer of the ribosyl-5-phosphate group from 5-phospho-alpha-D-ribose 1-diphosphate (PRPP) to the N9 position of the 6-oxopurines guanine and xanthine to form the corresponding ribonucleotides GMP (guanosine 5'-monophosphate) and XMP (xanthosine 5'-monophosphate), with the release of PPi. To a lesser extent, also acts on hypoxanthine. The sequence is that of Xanthine-guanine phosphoribosyltransferase from Serratia proteamaculans (strain 568).